Reading from the N-terminus, the 162-residue chain is Cyclic pyranopterin monophosphate synthase (162 aa).

Substrate contacts are provided by residues 79–81 and 117–118; these read LCH and ME. Residue Asp132 is part of the active site.

Belongs to the MoaC family. As to quaternary structure, homohexamer; trimer of dimers.

It carries out the reaction (8S)-3',8-cyclo-7,8-dihydroguanosine 5'-triphosphate = cyclic pyranopterin phosphate + diphosphate. Its pathway is cofactor biosynthesis; molybdopterin biosynthesis. Its function is as follows. Catalyzes the conversion of (8S)-3',8-cyclo-7,8-dihydroguanosine 5'-triphosphate to cyclic pyranopterin monophosphate (cPMP). The chain is Cyclic pyranopterin monophosphate synthase from Bordetella avium (strain 197N).